Consider the following 165-residue polypeptide: Chorismate pyruvate-lyase (165 aa).

Substrate is bound by residues methionine 35, arginine 77, leucine 115, and glutamate 156.

This sequence belongs to the UbiC family. In terms of assembly, monomer.

The protein resides in the cytoplasm. It carries out the reaction chorismate = 4-hydroxybenzoate + pyruvate. Its pathway is cofactor biosynthesis; ubiquinone biosynthesis. In terms of biological role, removes the pyruvyl group from chorismate, with concomitant aromatization of the ring, to provide 4-hydroxybenzoate (4HB) for the ubiquinone pathway. This chain is Chorismate pyruvate-lyase, found in Salmonella gallinarum (strain 287/91 / NCTC 13346).